The primary structure comprises 1106 residues: Protein translocase subunit SecA (1106 aa).

ATP-binding positions include glutamine 175, 193–197, and aspartate 694; that span reads GEGKT. The tract at residues 1021–1106 is disordered; that stretch reads QEAPADEQQP…KYKNCHGQNA (86 aa). Positions 1042–1056 are enriched in basic and acidic residues; that stretch reads QRQDMSKYREQKQDL. Positions 1057–1067 are enriched in polar residues; sequence SDPNQQAAASQ. Basic and acidic residues predominate over residues 1068-1085; it reads DTREQQKREPIRAEKTVG. Zn(2+) contacts are provided by cysteine 1090, cysteine 1092, cysteine 1101, and histidine 1102.

Belongs to the SecA family. As to quaternary structure, monomer and homodimer. Part of the essential Sec protein translocation apparatus which comprises SecA, SecYEG and auxiliary proteins SecDF. Other proteins may also be involved. It depends on Zn(2+) as a cofactor.

It localises to the cell inner membrane. The protein localises to the cytoplasm. The enzyme catalyses ATP + H2O + cellular proteinSide 1 = ADP + phosphate + cellular proteinSide 2.. Its function is as follows. Part of the Sec protein translocase complex. Interacts with the SecYEG preprotein conducting channel. Has a central role in coupling the hydrolysis of ATP to the transfer of proteins into and across the cell membrane, serving as an ATP-driven molecular motor driving the stepwise translocation of polypeptide chains across the membrane. This Bacteroides thetaiotaomicron (strain ATCC 29148 / DSM 2079 / JCM 5827 / CCUG 10774 / NCTC 10582 / VPI-5482 / E50) protein is Protein translocase subunit SecA.